The primary structure comprises 212 residues: Pyridoxine/pyridoxamine 5'-phosphate oxidase (212 aa).

Substrate contacts are provided by residues 8-11 (RREY) and K66. FMN-binding positions include 61 to 66 (RIVLLK), 76 to 77 (FT), R82, K83, and Q105. The substrate site is built by Y123, R127, and S131. Residues 140–141 (QS) and W185 each bind FMN. 191-193 (RLH) is a substrate binding site. Position 195 (R195) interacts with FMN.

Belongs to the pyridoxamine 5'-phosphate oxidase family. In terms of assembly, homodimer. It depends on FMN as a cofactor.

The enzyme catalyses pyridoxamine 5'-phosphate + O2 + H2O = pyridoxal 5'-phosphate + H2O2 + NH4(+). It carries out the reaction pyridoxine 5'-phosphate + O2 = pyridoxal 5'-phosphate + H2O2. Its pathway is cofactor metabolism; pyridoxal 5'-phosphate salvage; pyridoxal 5'-phosphate from pyridoxamine 5'-phosphate: step 1/1. It functions in the pathway cofactor metabolism; pyridoxal 5'-phosphate salvage; pyridoxal 5'-phosphate from pyridoxine 5'-phosphate: step 1/1. Functionally, catalyzes the oxidation of either pyridoxine 5'-phosphate (PNP) or pyridoxamine 5'-phosphate (PMP) into pyridoxal 5'-phosphate (PLP). This chain is Pyridoxine/pyridoxamine 5'-phosphate oxidase, found in Shewanella denitrificans (strain OS217 / ATCC BAA-1090 / DSM 15013).